The chain runs to 517 residues: MTEPNRAQAPAQNKAAADTPAVDENKIIAERREKLAALRQQGVAFPNDFRPTHQAAALQAQYADTEQATLEAAPVEVAIAGRMMLKRVMGKASFATVQDGSGQIQFYITRDKVGEEVYAAFKHWDLGDIISARGELFRTNKGELSVQVRELRLLSKSLRPLPDKFHGLADQEMKYRQRYVDLIVSPETRNTFRARTDAISSLRRHMADAGFMEVETPMLHPIPGGAAAKPFITHHNALDMQMFLRIAPELYLKRLIVGGFERVFEINRNFRNEGVSPRHNPEFTMMEFYAAYTDYRWLMDFTEDLIRKAAIDARGSAVLTYQDRELDLSKPFHRLTICQAIQKFAPQYTDAQLADAEFLRTELKKFGVNTNAPQFLNAGLGTLQLVLFEETAESQLWEPTFIVDYPVEVSPLARASDTVPGITERFELFITGREIANGFSELNDAEDQADRFRKQVEQKDAGDEEAMYFDADYIRALEYGMPPTGGCGIGIDRLVMLLTDSPNIRDVILFPHLRKED.

Positions 1–21 (MTEPNRAQAPAQNKAAADTPA) are disordered. Positions 7–20 (AQAPAQNKAAADTP) are enriched in low complexity. Mg(2+) contacts are provided by Glu-427 and Glu-434.

The protein belongs to the class-II aminoacyl-tRNA synthetase family. Homodimer. Mg(2+) is required as a cofactor.

The protein localises to the cytoplasm. It carries out the reaction tRNA(Lys) + L-lysine + ATP = L-lysyl-tRNA(Lys) + AMP + diphosphate. The sequence is that of Lysine--tRNA ligase from Cupriavidus taiwanensis (strain DSM 17343 / BCRC 17206 / CCUG 44338 / CIP 107171 / LMG 19424 / R1) (Ralstonia taiwanensis (strain LMG 19424)).